The sequence spans 485 residues: UDP-N-acetylmuramoyl-L-alanyl-D-glutamate--2,6-diaminopimelate ligase (485 aa).

UDP-N-acetyl-alpha-D-muramoyl-L-alanyl-D-glutamate-binding residues include Leu-27 and Ser-29. Gly-106 to Ser-112 provides a ligand contact to ATP. Residues Thr-148–Thr-149, Ser-175, Gln-181, and Arg-183 contribute to the UDP-N-acetyl-alpha-D-muramoyl-L-alanyl-D-glutamate site. N6-carboxylysine is present on Lys-215. Meso-2,6-diaminopimelate contacts are provided by residues Arg-382, Asp-406–Arg-409, Gly-454, and Glu-458. The Meso-diaminopimelate recognition motif motif lies at Asp-406 to Arg-409.

The protein belongs to the MurCDEF family. MurE subfamily. It depends on Mg(2+) as a cofactor. Post-translationally, carboxylation is probably crucial for Mg(2+) binding and, consequently, for the gamma-phosphate positioning of ATP.

It localises to the cytoplasm. It carries out the reaction UDP-N-acetyl-alpha-D-muramoyl-L-alanyl-D-glutamate + meso-2,6-diaminopimelate + ATP = UDP-N-acetyl-alpha-D-muramoyl-L-alanyl-gamma-D-glutamyl-meso-2,6-diaminopimelate + ADP + phosphate + H(+). It participates in cell wall biogenesis; peptidoglycan biosynthesis. In terms of biological role, catalyzes the addition of meso-diaminopimelic acid to the nucleotide precursor UDP-N-acetylmuramoyl-L-alanyl-D-glutamate (UMAG) in the biosynthesis of bacterial cell-wall peptidoglycan. The polypeptide is UDP-N-acetylmuramoyl-L-alanyl-D-glutamate--2,6-diaminopimelate ligase (Bradyrhizobium diazoefficiens (strain JCM 10833 / BCRC 13528 / IAM 13628 / NBRC 14792 / USDA 110)).